Reading from the N-terminus, the 1349-residue chain is Serine/threonine-protein kinase GIN4 (1349 aa).

The segment covering 1–20 (MPHSRQPSISSSIMSQSNHN) has biased composition (low complexity). The tract at residues 1 to 30 (MPHSRQPSISSSIMSQSNHNHPQKIGPWKL) is disordered. Residues Ser10, Ser11, Ser12, and Ser15 each carry the phosphoserine modification. Residues 28–288 (WKLGKTLGRG…TEKILRHPLL (261 aa)) form the Protein kinase domain. Residues 34–42 (LGRGATGRV) and Lys57 each bind ATP. Position 69 is a phosphothreonine (Thr69). Asp158 (proton acceptor) is an active-site residue. At Thr191 the chain carries Phosphothreonine. A phosphoserine mark is found at Ser294, Ser300, and Ser303. 2 disordered regions span residues 366 to 498 (QEDN…KAKP) and 510 to 532 (SNFS…YMID). Over residues 369 to 384 (NTNNNSPKKSTSFNNK) the composition is skewed to low complexity. Phosphoserine is present on residues Ser388, Ser390, and Ser393. Position 397 is a phosphothreonine (Thr397). Composition is skewed to polar residues over residues 406–418 (ISVS…QYKS) and 426–442 (ANRN…SANN). A phosphoserine mark is found at Ser407 and Ser409. At Thr412 the chain carries Phosphothreonine. A Phosphoserine modification is found at Ser413. Residues 443–470 (SPRKSPYKSPYRSPYRSPYKSPSKRYSY) show a composition bias toward low complexity. Residues Ser455, Ser469, Ser473, Ser477, and Ser485 each carry the phosphoserine modification. Residues 471 to 488 (NQSPTKSPYGRRSNSQRQ) are compositionally biased toward polar residues. Ser556 bears the Phosphoserine mark. The span at 570–585 (RNSIIGKNNNNSNSNK) shows a compositional bias: low complexity. Residues 570–593 (RNSIIGKNNNNSNSNKRMSKRKSI) form a disordered region. A Phosphoserine modification is found at Ser634. Residues 661 to 701 (EEKEAKEYERLMELERKKHEAELKARRELEKKKRRQKRRSI) adopt a coiled-coil conformation. Residues 712–737 (KNDADPNNSEQELVDEGIKQPKRQSK) are disordered. Phosphoserine occurs at positions 720 and 746. The segment at 756–798 (TLEDVENLKRRSASQPVPKRRQTPVLTRRPVSRLDPLWQAHEN) is disordered. Thr778, Thr869, and Thr876 each carry phosphothreonine. Ser891 is modified (phosphoserine). Thr941 carries the post-translational modification Phosphothreonine. Residue Ser973 is modified to Phosphoserine. Residues Thr990 and Thr992 each carry the phosphothreonine modification. Ser999 carries the post-translational modification Phosphoserine. A disordered region spans residues 1011–1229 (RTSYYDGSGK…AESKEEKPKS (219 aa)). Polar residues predominate over residues 1024-1040 (RASTTKRYNVHSSSGQR). Over residues 1044–1053 (KVPDLPKNDY) the composition is skewed to basic and acidic residues. Position 1056 is a phosphothreonine (Thr1056). Phosphoserine is present on residues Ser1059, Ser1074, Ser1077, Ser1078, Ser1080, and Ser1094. Over residues 1083 to 1094 (VFDKIKLPDGKS) the composition is skewed to basic and acidic residues. The residue at position 1095 (Thr1095) is a Phosphothreonine. Phosphoserine is present on residues Ser1097 and Ser1098. Thr1106 carries the phosphothreonine modification. Polar residues predominate over residues 1134–1149 (IESSQPMSKVRGNNSS). Ser1154 carries the phosphoserine modification. Low complexity predominate over residues 1202 to 1215 (NNTNAATNTTTQQQ). Position 1218 is a phosphoserine (Ser1218).

This sequence belongs to the protein kinase superfamily. CAMK Ser/Thr protein kinase family. NIM1 subfamily. Associates with the septin complex which consists of CDC3, CDC10, CDC11, CDC12, and SEP7. In terms of processing, hyperphosphorylated during mitosis at dozens of sites. Among these, 7 have perfect or minimal CDK consensus sites and are CDC28 targets.

It is found in the cytoplasm. Its subcellular location is the bud neck. The enzyme catalyses L-seryl-[protein] + ATP = O-phospho-L-seryl-[protein] + ADP + H(+). It catalyses the reaction L-threonyl-[protein] + ATP = O-phospho-L-threonyl-[protein] + ADP + H(+). In terms of biological role, serine/threonine-protein kinase which regulates the localization and the function of the septins during mitosis. Involved in the formation of the septin ring but not the basal septin band. Phosphorylates septins CDC11 and SEP7. Required for the transition from pseudohyphae to hyphae. Acts upstream of IRS4 and INP51 in regulating cell wall integrity responses. Involved in propolis-induced cell death. The protein is Serine/threonine-protein kinase GIN4 (GIN4) of Candida albicans (strain SC5314 / ATCC MYA-2876) (Yeast).